The primary structure comprises 235 residues: RNA pyrophosphohydrolase (235 aa).

The Nudix hydrolase domain occupies 6–149; that stretch reads GFRPNVGIIL…KREVYQLALS (144 aa). The Nudix box motif lies at 38-59; sequence GGIKYGETPEQAMFRELHEEVG. Residues 161 to 235 are disordered; it reads APLSPYGRGG…PDDTAPKDNS (75 aa). The segment covering 171 to 196 has biased composition (basic and acidic residues); the sequence is QHRERDGRDARDSRERSSDQGGRNEQ. Residues 203–220 are compositionally biased toward low complexity; that stretch reads TVTTTTVIVETVSVSAPT.

Belongs to the Nudix hydrolase family. RppH subfamily. A divalent metal cation is required as a cofactor.

In terms of biological role, accelerates the degradation of transcripts by removing pyrophosphate from the 5'-end of triphosphorylated RNA, leading to a more labile monophosphorylated state that can stimulate subsequent ribonuclease cleavage. This Ralstonia pickettii (strain 12J) protein is RNA pyrophosphohydrolase.